The primary structure comprises 951 residues: Cadmium/zinc-transporting ATPase HMA2 (951 aa).

The Cytoplasmic segment spans residues 1–83; that stretch reads MASKKMTKSY…VRVTGETNFK (83 aa). One can recognise an HMA domain in the interval 7 to 73; the sequence is TKSYFDVLGI…ALNQAQLEAN (67 aa). A helical membrane pass occupies residues 84 to 105; the sequence is NKWPSPFAVVSGILLLLSFFKY. Over 106–108 the chain is Extracellular; sequence LYS. A helical membrane pass occupies residues 109–128; sequence PFRWLAVAAVVAGIYPILAK. Residues 129–135 are Cytoplasmic-facing; it reads AVASLAR. Residues 136-156 form a helical membrane-spanning segment; it reads FRIDINILVVVTVGATIGMQD. A topological domain (extracellular) is located at residue Y157. The chain crosses the membrane as a helical span at residues 158 to 178; that stretch reads TEAAVVVFLFTIAEWLQSRAS. The Cytoplasmic segment spans residues 179–304; it reads YKASAVMQSL…KTETQRFIDK (126 aa). The chain crosses the membrane as a helical span at residues 305 to 327; the sequence is CSKYYTPAIILISICFVAIPFAL. Residues 328 to 335 are Extracellular-facing; the sequence is KVHNLKHW. Residues 336–353 traverse the membrane as a helical segment; sequence VHLALVVLVSACPCGLIL. Residues 354–647 are Cytoplasmic-facing; the sequence is STPVATFCAL…KLAKRAKRKV (294 aa). Catalysis depends on D391, which acts as the 4-aspartylphosphate intermediate. Residues D592 and D596 each contribute to the Mg(2+) site. A helical membrane pass occupies residues 648–667; it reads VENVVISITMKGAILALAFA. Residues 668–671 lie on the Extracellular side of the membrane; that stretch reads GHPL. A helical membrane pass occupies residues 672-691; it reads IWAAVLADVGTCLLVILNSM. The Cytoplasmic segment spans residues 692-951; it reads LLLSDKHKTG…VGTLKEIVIE (260 aa). The span at 841 to 851 shows a compositional bias: basic and acidic residues; the sequence is ELQQSCHDKPS. Residues 841–866 are disordered; sequence ELQQSCHDKPSGLDIGTGPKHEGSST.

This sequence belongs to the cation transport ATPase (P-type) (TC 3.A.3) family. Type IB subfamily. As to expression, predominantly expressed in the vascular tissues of roots, stems, and leaves. Also detected in developing anthers.

The protein resides in the cell membrane. It catalyses the reaction Zn(2+)(in) + ATP + H2O = Zn(2+)(out) + ADP + phosphate + H(+). It carries out the reaction Cd(2+)(in) + ATP + H2O = Cd(2+)(out) + ADP + phosphate + H(+). Functionally, plays an important role in zinc transport and homeostasis. Could also be involved in cadmium detoxification. This chain is Cadmium/zinc-transporting ATPase HMA2 (HMA2), found in Arabidopsis thaliana (Mouse-ear cress).